Consider the following 537-residue polypeptide: Chaperonin GroEL (537 aa).

ATP contacts are provided by residues 29–32, 86–90, Gly-413, and Asp-492; these read TLGP and DGTTT.

This sequence belongs to the chaperonin (HSP60) family. As to quaternary structure, forms a cylinder of 14 subunits composed of two heptameric rings stacked back-to-back. Interacts with the co-chaperonin GroES.

The protein localises to the cytoplasm. The enzyme catalyses ATP + H2O + a folded polypeptide = ADP + phosphate + an unfolded polypeptide.. Together with its co-chaperonin GroES, plays an essential role in assisting protein folding. The GroEL-GroES system forms a nano-cage that allows encapsulation of the non-native substrate proteins and provides a physical environment optimized to promote and accelerate protein folding. In Dehalococcoides mccartyi (strain ATCC BAA-2266 / KCTC 15142 / 195) (Dehalococcoides ethenogenes (strain 195)), this protein is Chaperonin GroEL.